A 705-amino-acid polypeptide reads, in one-letter code: Catalase C (705 aa).

Residues 1–31 (MAKKPSAPNNTKPATIHDQKATRGNGGELHQ) form a disordered region. Active-site residues include histidine 88 and asparagine 161. Position 375 (tyrosine 375) interacts with heme.

It belongs to the catalase family. HPII subfamily. The cofactor is heme.

It carries out the reaction 2 H2O2 = O2 + 2 H2O. Functionally, decomposes hydrogen peroxide into water and oxygen; serves to protect cells from the toxic effects of hydrogen peroxide. Could protect cells in nodules which have a high potential to produce hydrogen peroxide because of the strong reducing conditions required for nitrogen fixation and the action of several proteins. This chain is Catalase C (katE), found in Rhizobium meliloti (strain 1021) (Ensifer meliloti).